The primary structure comprises 445 residues: MAAVTDNQQSGDNNGLVSLAQRSTTVAVQKSDSSGSQGQGTTDNKFQKYLNTTQALHQMGVIVPSLETWPGKPSTGIATRAAGGVSVQAATRQSTSTNEDLSNVITQLYHTSTSQLAYLNGQIVVMGSDRVPSLWYWVVDERTTSGRATWWAHTELNWGTDKQKQFVENQLGFKDDSNSDSKNSNLKAQGLTQPAYLIAGLDVVADHLVFAAFKAGAVGYDMTTDSNASTKDQVLAWSTTAGLDSDGGYKALVENTAGLNGPINGLFILLDTFAYVTPVSGMKGGSKNTEAVQTKYPVKDDSKASAKIASLINASPLNSYGDDGVTVFDALGLNFNFKLDEARLPSRTDQLLVYGIVNESELKSARENAQSTSDDNSNTKVKWTNTASHYLPVPYYYSANFPEAGNRRRAEQRNGVITIKKAIYPEVRGRQLQNIFDDWKTNKSR.

Residues serine 23 to asparagine 44 are disordered. A compositionally biased stretch (low complexity) spans serine 31–aspartate 43.

The protein belongs to the MgpC family.

In Mycoplasma pneumoniae (strain ATCC 29342 / M129 / Subtype 1) (Mycoplasmoides pneumoniae), this protein is Putative MgpC-like protein MPN_464.